Reading from the N-terminus, the 282-residue chain is Gap junction Cx32.7 protein (282 aa).

At 2–13 the chain is on the cytoplasmic side; that stretch reads GEWDLLGRLLDK. The helical transmembrane segment at 14–36 threads the bilayer; sequence VQSHSTVIGKVWLTVLFVFRILV. The Extracellular segment spans residues 37-76; that stretch reads LRTGADRVWGDEQSDFVCNTQQPGCENVCYDLAFPISHVR. A helical membrane pass occupies residues 77 to 99; the sequence is FWFLQIIAVATPKLLYLGHVLHV. Residues 100-148 lie on the Cytoplasmic side of the membrane; sequence IHAEKKMKERMKKQAELDDQTNLFLRKAYKVPKYTKSSGKISIRGRLLR. The chain crosses the membrane as a helical span at residues 149 to 171; that stretch reads SYVYHLVAKIILEVLFIVGQYFL. Residues 172 to 203 are Extracellular-facing; that stretch reads YGFTLDTRYVCTRFPCPHKVDCFLSRPTEKSV. A helical transmembrane segment spans residues 204–226; the sequence is IIWFMLVAAFVSLFLSLVELFYL. The Cytoplasmic portion of the chain corresponds to 227–282; that stretch reads CVKAAKECMARRQDYTVTPVTPPLLARKSFKSHKEVFQNCVNEPASPENNMEEVHI.

It belongs to the connexin family. Alpha-type (group II) subfamily. As to quaternary structure, a connexon is composed of a hexamer of connexins. Expressed equally in incompetent and competent ovaries.

It localises to the cell membrane. The protein resides in the cell junction. It is found in the gap junction. Its function is as follows. One gap junction consists of a cluster of closely packed pairs of transmembrane channels, the connexons, through which materials of low MW diffuse from one cell to a neighboring cell. The polypeptide is Gap junction Cx32.7 protein (Micropogonias undulatus (Atlantic croaker)).